Here is a 441-residue protein sequence, read N- to C-terminus: 5-hydroxytryptamine receptor 3B (441 aa).

An N-terminal signal peptide occupies residues 1–21 (MLSSVMAPLWACILVAAGILA). Residues 22–238 (TDTHHPQDSA…IQFNVVMRRH (217 aa)) are Extracellular-facing. Residues N52, N96, N138, N168, and N203 are each glycosylated (N-linked (GlcNAc...) asparagine). C155 and C169 are oxidised to a cystine. The chain crosses the membrane as a helical span at residues 239 to 259 (PLVYVVSLLIPSIFLMLVDLG). Residues 260 to 268 (SFYLPPNCR) are Cytoplasmic-facing. The chain crosses the membrane as a helical span at residues 269–286 (ARIVFKTSVLVGYTVFRV). N-linked (GlcNAc...) asparagine glycosylation occurs at N287. The Extracellular portion of the chain corresponds to 287–303 (NMSNQVPRSVGSTPLIG). Residues 304–324 (HFFTICMAFLVLSLAKSIVLV) traverse the membrane as a helical segment. At 325–414 (KFLHDEQRGG…WLVLLSRFDR (90 aa)) the chain is on the cytoplasmic side. The HA-stretch; determines single-channel conductance in 5-HT3 receptors stretch occupies residues 381-413 (VWSQLQSISNYLQTQDQTDQQEAEWLVLLSRFD). The helical transmembrane segment at 415–435 (LLFQSYLFMLGIYTITLCSLW) threads the bilayer. The Extracellular segment spans residues 436-441 (ALWGGV).

Belongs to the ligand-gated ion channel (TC 1.A.9) family. 5-hydroxytryptamine receptor (TC 1.A.9.2) subfamily. HTR3B sub-subfamily. In terms of assembly, forms homopentameric as well as heteropentameric serotonin-activated cation-selective channel complexes with HTR3A. The homomeric complex is not functional. Heteropentameric complexes display properties which resemble that of neuronal serotonin-activated channels in vivo. In terms of processing, N-glycosylation required for membrane localization. In terms of tissue distribution, expressed in the brain cortex, in the caudate nucleus, the hippocampus, the thalamus and the amygdala. Detected in the kidney and testis as well as in monocytes of the spleen, small and large intestine, uterus, prostate, ovary and placenta.

The protein localises to the postsynaptic cell membrane. The protein resides in the cell membrane. It catalyses the reaction Na(+)(in) = Na(+)(out). The catalysed reaction is K(+)(in) = K(+)(out). It carries out the reaction Ca(2+)(in) = Ca(2+)(out). Its function is as follows. Forms serotonin (5-hydroxytryptamine/5-HT3)-activated cation-selective channel complexes, which when activated cause fast, depolarizing responses in neurons. This Homo sapiens (Human) protein is 5-hydroxytryptamine receptor 3B.